The primary structure comprises 252 residues: 2-succinyl-6-hydroxy-2,4-cyclohexadiene-1-carboxylate synthase (252 aa).

It belongs to the AB hydrolase superfamily. MenH family. In terms of assembly, monomer.

The enzyme catalyses 5-enolpyruvoyl-6-hydroxy-2-succinyl-cyclohex-3-ene-1-carboxylate = (1R,6R)-6-hydroxy-2-succinyl-cyclohexa-2,4-diene-1-carboxylate + pyruvate. The protein operates within quinol/quinone metabolism; 1,4-dihydroxy-2-naphthoate biosynthesis; 1,4-dihydroxy-2-naphthoate from chorismate: step 3/7. It participates in quinol/quinone metabolism; menaquinone biosynthesis. In terms of biological role, catalyzes a proton abstraction reaction that results in 2,5-elimination of pyruvate from 2-succinyl-5-enolpyruvyl-6-hydroxy-3-cyclohexene-1-carboxylate (SEPHCHC) and the formation of 2-succinyl-6-hydroxy-2,4-cyclohexadiene-1-carboxylate (SHCHC). This is 2-succinyl-6-hydroxy-2,4-cyclohexadiene-1-carboxylate synthase from Escherichia coli (strain UTI89 / UPEC).